The chain runs to 115 residues: Translation initiation factor 1A 2 (115 aa).

The segment at 1–34 (MANYRSTIRHRNSGSRKSVSGDTHEVTRVRTPQK) is disordered. Basic and acidic residues predominate over residues 22–34 (DTHEVTRVRTPQK). The 75-residue stretch at 27 to 101 (TRVRTPQKDR…SKADVTWKYT (75 aa)) folds into the S1-like domain.

Belongs to the eIF-1A family.

Seems to be required for maximal rate of protein biosynthesis. Enhances ribosome dissociation into subunits and stabilizes the binding of the initiator Met-tRNA(I) to 40 S ribosomal subunits. This is Translation initiation factor 1A 2 from Methanosarcina barkeri (strain Fusaro / DSM 804).